The following is a 273-amino-acid chain: Undecaprenyl-diphosphatase (273 aa).

Transmembrane regions (helical) follow at residues 39–59 (SGLT…VVYF), 86–106 (LPFL…LFET), 117–137 (LLIG…DLFG), 146–166 (VTVS…IPGV), 189–209 (FSFL…MLHL), 220–240 (LPLA…VAFL), and 249–269 (IAPF…VILT).

Belongs to the UppP family.

Its subcellular location is the cell inner membrane. It catalyses the reaction di-trans,octa-cis-undecaprenyl diphosphate + H2O = di-trans,octa-cis-undecaprenyl phosphate + phosphate + H(+). Its function is as follows. Catalyzes the dephosphorylation of undecaprenyl diphosphate (UPP). Confers resistance to bacitracin. The chain is Undecaprenyl-diphosphatase from Pelobacter propionicus (strain DSM 2379 / NBRC 103807 / OttBd1).